Here is a 341-residue protein sequence, read N- to C-terminus: MAKVYYNGDANEKYLQSKTVAIIGYGSQGHAHAQNLRDSGVNVIVGLRKGKSWEQAEKDGFAVYSVREATKQADIVMVLLPDEKQPNVYKEEIEPELQPGNALVFAHGFNIHFNQIVPPEHVDVFLVAPKGPGHLVRRTYTEGAGVPALIAVYQDVTGEAKQTALAYAKAIGATRAGVLETTFKEETETDLFGEQAVLCGGLTSLIKAGFETLVEAGYQPEVAYFECLHEMKLIVDLLYEGGLSWMRHSISDTAQWGDFISGPRIINDAVKAEMKKVLHDIQTGKFAKGWILENQANRPEFNAINRRENEHLIEIVGRELRSMMPFVKEKQKEVVVSSAKN.

In terms of domain architecture, KARI N-terminal Rossmann spans 2–181 (AKVYYNGDAN…GATRAGVLET (180 aa)). Residues 25–28 (YGSQ), Arg-48, Ser-52, and 82–85 (DEKQ) each bind NADP(+). Residue His-107 is part of the active site. Gly-133 is an NADP(+) binding site. The region spanning 182 to 327 (TFKEETETDL…RELRSMMPFV (146 aa)) is the KARI C-terminal knotted domain. Mg(2+) contacts are provided by Asp-190, Glu-194, Glu-226, and Glu-230. Ser-251 provides a ligand contact to substrate.

Belongs to the ketol-acid reductoisomerase family. Requires Mg(2+) as cofactor.

The catalysed reaction is (2R)-2,3-dihydroxy-3-methylbutanoate + NADP(+) = (2S)-2-acetolactate + NADPH + H(+). The enzyme catalyses (2R,3R)-2,3-dihydroxy-3-methylpentanoate + NADP(+) = (S)-2-ethyl-2-hydroxy-3-oxobutanoate + NADPH + H(+). Its pathway is amino-acid biosynthesis; L-isoleucine biosynthesis; L-isoleucine from 2-oxobutanoate: step 2/4. The protein operates within amino-acid biosynthesis; L-valine biosynthesis; L-valine from pyruvate: step 2/4. In terms of biological role, involved in the biosynthesis of branched-chain amino acids (BCAA). Catalyzes an alkyl-migration followed by a ketol-acid reduction of (S)-2-acetolactate (S2AL) to yield (R)-2,3-dihydroxy-isovalerate. In the isomerase reaction, S2AL is rearranged via a Mg-dependent methyl migration to produce 3-hydroxy-3-methyl-2-ketobutyrate (HMKB). In the reductase reaction, this 2-ketoacid undergoes a metal-dependent reduction by NADPH to yield (R)-2,3-dihydroxy-isovalerate. This Geobacillus sp. (strain WCH70) protein is Ketol-acid reductoisomerase (NADP(+)).